A 338-amino-acid chain; its full sequence is Fructose-1,6-bisphosphatase class 1 (338 aa).

Mg(2+) contacts are provided by E92, D113, L115, and D116. Residues 116–119 (DGSS), N208, and K274 contribute to the substrate site. A Mg(2+)-binding site is contributed by E280.

The protein belongs to the FBPase class 1 family. Homotetramer. Requires Mg(2+) as cofactor.

The protein resides in the cytoplasm. It catalyses the reaction beta-D-fructose 1,6-bisphosphate + H2O = beta-D-fructose 6-phosphate + phosphate. It functions in the pathway carbohydrate biosynthesis; gluconeogenesis. This chain is Fructose-1,6-bisphosphatase class 1, found in Paramagnetospirillum magneticum (strain ATCC 700264 / AMB-1) (Magnetospirillum magneticum).